The chain runs to 525 residues: Penton protein (525 aa).

The tract at residues 1–47 (MWGLQPPTSIPPPPPPTELTPSTYPAMVNGYPPPAASAQSCSSSGGQ) is disordered. Residues 8-18 (TSIPPPPPPTE) show a composition bias toward pro residues. The segment covering 36–47 (ASAQSCSSSGGQ) has biased composition (low complexity).

Belongs to the adenoviridae penton family. Interacts with the fiber protein (via N-terminal tail region). Interacts with the capsid vertex protein; this interaction binds the penton base to neighboring peripentonal hexons.

It is found in the virion. It localises to the host nucleus. Major capsid protein that self-associates to form penton base pentamers, each in the shape of a pentagon, situated at the 12 vertices of the pseudo T=25 capsid. Involved in virus secondary attachment to host cell after initial attachment by the fiber protein, and in endocytosis of virions. As the virus enters the host cell, penton proteins are shed concomitant with virion acidification in the endosome. This chain is Penton protein, found in Galliformes (FAdV-10).